Consider the following 387-residue polypeptide: 8-amino-7-oxononanoate synthase (387 aa).

Arg19 lines the substrate pocket. 106–107 (GY) contacts pyridoxal 5'-phosphate. Residue His131 coordinates substrate. Residues Ser177, His205, and Thr234 each coordinate pyridoxal 5'-phosphate. Lys237 is modified (N6-(pyridoxal phosphate)lysine). Substrate is bound at residue Thr351.

The protein belongs to the class-II pyridoxal-phosphate-dependent aminotransferase family. BioF subfamily. In terms of assembly, homodimer. It depends on pyridoxal 5'-phosphate as a cofactor.

It carries out the reaction 6-carboxyhexanoyl-[ACP] + L-alanine + H(+) = (8S)-8-amino-7-oxononanoate + holo-[ACP] + CO2. It functions in the pathway cofactor biosynthesis; biotin biosynthesis. Catalyzes the decarboxylative condensation of pimeloyl-[acyl-carrier protein] and L-alanine to produce 8-amino-7-oxononanoate (AON), [acyl-carrier protein], and carbon dioxide. The polypeptide is 8-amino-7-oxononanoate synthase (Methylococcus capsulatus (strain ATCC 33009 / NCIMB 11132 / Bath)).